A 122-amino-acid polypeptide reads, in one-letter code: Large ribosomal subunit protein uL14 (122 aa).

The protein belongs to the universal ribosomal protein uL14 family. Part of the 50S ribosomal subunit. Forms a cluster with proteins L3 and L19. In the 70S ribosome, L14 and L19 interact and together make contacts with the 16S rRNA in bridges B5 and B8.

Its function is as follows. Binds to 23S rRNA. Forms part of two intersubunit bridges in the 70S ribosome. In Streptococcus gordonii (strain Challis / ATCC 35105 / BCRC 15272 / CH1 / DL1 / V288), this protein is Large ribosomal subunit protein uL14.